The sequence spans 117 residues: Biogenesis of lysosome-related organelles complex 1 subunit BLS1 (117 aa).

Positions 97 to 117 are disordered; it reads EGKAQDTEQAPGKGDRIFRSD.

Belongs to the BLOC1S1 family. Component of the biogenesis of lysosome-related organelles complex-1 (BLOC-1).

It localises to the endosome. Component of the biogenesis of lysosome-related organelles complex-1 (BLOC-1), a complex involved in endosomal cargo sorting. The protein is Biogenesis of lysosome-related organelles complex 1 subunit BLS1 (BLS1) of Eremothecium gossypii (strain ATCC 10895 / CBS 109.51 / FGSC 9923 / NRRL Y-1056) (Yeast).